The primary structure comprises 408 residues: Putative UPF0496 protein 2 (408 aa).

2 helical membrane passes run 224–244 (RIARGTAAAALVGACAAAIVA) and 252–272 (ALVGIGVAAAAFGATPAGAAR). The interval 385–408 (MARGLPPPSPATVTTTSEERLTSS) is disordered.

This sequence belongs to the UPF0496 family.

The protein resides in the membrane. This Oryza sativa subsp. japonica (Rice) protein is Putative UPF0496 protein 2.